Reading from the N-terminus, the 458-residue chain is Argininosuccinate lyase (458 aa).

The protein belongs to the lyase 1 family. Argininosuccinate lyase subfamily.

The protein resides in the cytoplasm. The catalysed reaction is 2-(N(omega)-L-arginino)succinate = fumarate + L-arginine. It participates in amino-acid biosynthesis; L-arginine biosynthesis; L-arginine from L-ornithine and carbamoyl phosphate: step 3/3. In Actinobacillus pleuropneumoniae serotype 3 (strain JL03), this protein is Argininosuccinate lyase.